We begin with the raw amino-acid sequence, 281 residues long: Probable endonuclease 4 (281 aa).

Zn(2+)-binding residues include His69, His109, Glu145, Asp179, His182, His216, Asp229, His231, and Glu261.

The protein belongs to the AP endonuclease 2 family. The cofactor is Zn(2+).

It catalyses the reaction Endonucleolytic cleavage to 5'-phosphooligonucleotide end-products.. Its function is as follows. Endonuclease IV plays a role in DNA repair. It cleaves phosphodiester bonds at apurinic or apyrimidinic (AP) sites, generating a 3'-hydroxyl group and a 5'-terminal sugar phosphate. The chain is Probable endonuclease 4 from Chlorobaculum parvum (strain DSM 263 / NCIMB 8327) (Chlorobium vibrioforme subsp. thiosulfatophilum).